We begin with the raw amino-acid sequence, 144 residues long: Crossover junction endodeoxyribonuclease Hjc (144 aa).

Glu12 lines the Mg(2+) pocket. Residue Ser32 is part of the active site. The Mg(2+) site is built by Asp42 and Glu55.

This sequence belongs to the Holliday junction resolvase Hjc family. Homodimer; forms a 2:1 complex with Hel308 (Hjm). May form a complex with Holliday junction DNA, Hjc and Hjm. Mg(2+) serves as cofactor.

It catalyses the reaction Endonucleolytic cleavage at a junction such as a reciprocal single-stranded crossover between two homologous DNA duplexes (Holliday junction).. Cleavage stimulated by PCNA123 and PCNA323 and by RadC2. Functionally, a structure-specific endonuclease that resolves Holliday junction (HJ) intermediates during genetic recombination. Cleaves 4-way DNA junctions introducing paired nicks in opposing strands, leaving a 5'-terminal phosphate and a 3'-terminal hydroxyl group that are subsequently ligated to produce recombinant products. Inhibits the helicase activity of Hel308 (Hjm). This is Crossover junction endodeoxyribonuclease Hjc from Sulfurisphaera tokodaii (strain DSM 16993 / JCM 10545 / NBRC 100140 / 7) (Sulfolobus tokodaii).